Reading from the N-terminus, the 190-residue chain is Putative manganese efflux pump MntP (190 aa).

6 consecutive transmembrane segments (helical) span residues 3–23 (PISLLFLALAMSTDAFAAALG), 41–61 (LIFGAIETITPVIGWGIGQVA), 69–89 (DHWIAFTLLLVLGLHMIYNGL), 105–125 (FWILAVTAFATSIDALAVGVG), 133–153 (IMVAALAIGLATTVMVTIGVM), and 168–188 (IVGGIVLIVVGTTILYEHLTA).

Belongs to the MntP (TC 9.B.29) family.

It localises to the cell inner membrane. In terms of biological role, probably functions as a manganese efflux pump. This is Putative manganese efflux pump MntP from Pseudomonas syringae pv. tomato (strain ATCC BAA-871 / DC3000).